A 100-amino-acid chain; its full sequence is Urease subunit gamma (100 aa).

The protein belongs to the urease gamma subunit family. Heterotrimer of UreA (gamma), UreB (beta) and UreC (alpha) subunits. Three heterotrimers associate to form the active enzyme.

It is found in the cytoplasm. It catalyses the reaction urea + 2 H2O + H(+) = hydrogencarbonate + 2 NH4(+). It functions in the pathway nitrogen metabolism; urea degradation; CO(2) and NH(3) from urea (urease route): step 1/1. The polypeptide is Urease subunit gamma (Bradyrhizobium diazoefficiens (strain JCM 10833 / BCRC 13528 / IAM 13628 / NBRC 14792 / USDA 110)).